A 236-amino-acid chain; its full sequence is Peptidyl-prolyl cis-trans isomerase CYP21-4 (236 aa).

Residues 22 to 42 (ISISTIIVCNLVVAVVILSLV) form a helical; Signal-anchor for type II membrane protein membrane-spanning segment. Positions 52-71 (SRNTIEHETRSQRFEDTNTA) are disordered. Basic and acidic residues predominate over residues 54–67 (NTIEHETRSQRFED). Residues 82-232 (FADINTSKGL…SPIGITGVVL (151 aa)) enclose the PPIase cyclophilin-type domain. Residue asparagine 86 is glycosylated (N-linked (GlcNAc...) asparagine).

Belongs to the cyclophilin-type PPIase family. Ubiquitous.

It localises to the membrane. It carries out the reaction [protein]-peptidylproline (omega=180) = [protein]-peptidylproline (omega=0). In terms of biological role, PPIases accelerate the folding of proteins. It catalyzes the cis-trans isomerization of proline imidic peptide bonds in oligopeptides. This Arabidopsis thaliana (Mouse-ear cress) protein is Peptidyl-prolyl cis-trans isomerase CYP21-4 (CYP21-4).